A 160-amino-acid polypeptide reads, in one-letter code: Transcription antitermination protein NusB (160 aa).

Belongs to the NusB family.

In terms of biological role, involved in transcription antitermination. Required for transcription of ribosomal RNA (rRNA) genes. Binds specifically to the boxA antiterminator sequence of the ribosomal RNA (rrn) operons. In Mycolicibacterium smegmatis (strain ATCC 700084 / mc(2)155) (Mycobacterium smegmatis), this protein is Transcription antitermination protein NusB.